Here is a 119-residue protein sequence, read N- to C-terminus: Ribonuclease P protein component (119 aa).

The protein belongs to the RnpA family. In terms of assembly, consists of a catalytic RNA component (M1 or rnpB) and a protein subunit.

It catalyses the reaction Endonucleolytic cleavage of RNA, removing 5'-extranucleotides from tRNA precursor.. Functionally, RNaseP catalyzes the removal of the 5'-leader sequence from pre-tRNA to produce the mature 5'-terminus. It can also cleave other RNA substrates such as 4.5S RNA. The protein component plays an auxiliary but essential role in vivo by binding to the 5'-leader sequence and broadening the substrate specificity of the ribozyme. The sequence is that of Ribonuclease P protein component from Listeria monocytogenes serotype 4b (strain CLIP80459).